The sequence spans 451 residues: Nicotinamide phosphoribosyltransferase (451 aa).

Residue arginine 209 coordinates diphosphate. Aspartate 232 is a beta-nicotinamide D-ribonucleotide binding site. Positions 248 and 309 each coordinate diphosphate. Residues 309-311 (RPD), 364-365 (GD), and arginine 403 each bind beta-nicotinamide D-ribonucleotide.

Belongs to the NAPRTase family.

It carries out the reaction beta-nicotinamide D-ribonucleotide + diphosphate = 5-phospho-alpha-D-ribose 1-diphosphate + nicotinamide + H(+). It participates in cofactor biosynthesis; NAD(+) biosynthesis; nicotinamide D-ribonucleotide from 5-phospho-alpha-D-ribose 1-diphosphate and nicotinamide: step 1/1. In terms of biological role, catalyzes the condensation of nicotinamide with 5-phosphoribosyl-1-pyrophosphate to yield nicotinamide mononucleotide, an intermediate in the biosynthesis of NAD. The chain is Nicotinamide phosphoribosyltransferase from Mycoplasma pneumoniae (strain ATCC 29342 / M129 / Subtype 1) (Mycoplasmoides pneumoniae).